A 268-amino-acid polypeptide reads, in one-letter code: MPSFHNTITIGHRPNGDSKRTTYLVTGASRGIGKGLVASFLARPDSTVIACVRNVASQSKALSDLPCAEGSSLIVVKLDCAVETDPASAVEELQSAHNIRHIDVVVANAAIAGAYGPTSTLPLDAVKEHMQINCYSVLLLFQATRPLLEQAAPGKAKFVFIGAPISTITQMEECARAPLGAYGLTKLAANYLVRKFHFENKWLMSFVIDPGHVQTDMGDSGARLMGRKEAPTTLQQSVDGICARIDEATKEESSGQFLLHEDGSRLPW.

Residues I32, D79, N108, Y182, K186, V213, and T215 each contribute to the NADP(+) site. The active-site Proton donor is Y182. The active-site Lowers pKa of active site Tyr is K186.

This sequence belongs to the short-chain dehydrogenases/reductases (SDR) family.

The protein localises to the cytoplasm. It localises to the cytosol. The protein resides in the vacuole. It carries out the reaction (1'S)-averantin + NADP(+) = norsolorinic acid + NADPH + H(+). It functions in the pathway mycotoxin biosynthesis. Norsolorinic acid ketoreductase; part of the fragmented gene cluster that mediates the biosynthesis of dothistromin (DOTH), a polyketide toxin very similar in structure to the aflatoxin precursor, versicolorin B. The first step of the pathway is the conversion of acetate to norsolorinic acid (NOR) and requires the fatty acid synthase subunits hexA and hexB, as well as the polyketide synthase pksA. PksA combines a hexanoyl starter unit and 7 malonyl-CoA extender units to synthesize the precursor NOR. The hexanoyl starter unit is provided to the acyl-carrier protein (ACP) domain by the fungal fatty acid synthase hexA/hexB. The second step is the conversion of NOR to averantin (AVN) and requires the norsolorinic acid ketoreductase nor1, which catalyzes the dehydration of norsolorinic acid to form (1'S)-averantin. The cytochrome P450 monooxygenase avnA then catalyzes the hydroxylation of AVN to 5'hydroxyaverantin (HAVN). The next step is performed by adhA that transforms HAVN to averufin (AVF). Averufin might then be converted to hydroxyversicolorone by cypX and avfA. Hydroxyversicolorone is further converted versiconal hemiacetal acetate (VHA) by moxY. VHA is then the substrate for the versiconal hemiacetal acetate esterase est1 to yield versiconal (VAL). Versicolorin B synthase vbsA then converts VAL to versicolorin B (VERB) by closing the bisfuran ring. Then, the activity of the versicolorin B desaturase verB leads to versicolorin A (VERA). DotB, a predicted chloroperoxidase, may perform epoxidation of the A-ring of VERA. Alternatively, a cytochrome P450, such as cypX or avnA could catalyze this step. It is also possible that another, uncharacterized, cytochrome P450 enzyme is responsible for this step. Opening of the epoxide could potentially be achieved by the epoxide hydrolase epoA. However, epoA seems not to be required for DOTH biosynthesis, but other epoxide hydrolases may have the ability to complement this hydrolysis. Alternatively, opening of the epoxide ring could be achieved non-enzymatically. The next step is the deoxygenation of ring A to yield the 5,8-dihydroxyanthraquinone which is most likely catalyzed by the NADPH dehydrogenase encoded by ver1. The last stages of DOTH biosynthesis are proposed to involve hydroxylation of the bisfuran. OrdB and norB might have oxidative roles here. An alternative possibility is that cytochrome P450 monoogenases such as avnA and cypX might perform these steps in addition to previously proposed steps. This chain is Norsolorinic acid ketoreductase nor1, found in Dothistroma septosporum (strain NZE10 / CBS 128990) (Red band needle blight fungus).